Reading from the N-terminus, the 461-residue chain is Dihydrolipoyl dehydrogenase (461 aa).

Residues 34-42 (EEDQAGGTC), Lys51, and Gly114 each bind FAD. A disulfide bond links Cys42 and Cys47. Residues 177 to 181 (GGGVI), Glu200, and 261 to 264 (AIGR) contribute to the NAD(+) site. The FAD site is built by Asp304 and Ala312. The Proton acceptor role is filled by His436.

This sequence belongs to the class-I pyridine nucleotide-disulfide oxidoreductase family. Requires FAD as cofactor.

Its subcellular location is the cytoplasm. It catalyses the reaction N(6)-[(R)-dihydrolipoyl]-L-lysyl-[protein] + NAD(+) = N(6)-[(R)-lipoyl]-L-lysyl-[protein] + NADH + H(+). In terms of biological role, the branched-chain alpha-keto dehydrogenase complex catalyzes the overall conversion of alpha-keto acids to acyl-CoA and CO(2). It contains multiple copies of 3 enzymatic components: branched-chain alpha-keto acid decarboxylase (E1), lipoamide acyltransferase (E2) and lipoamide dehydrogenase (E3). This Chlamydia pneumoniae (Chlamydophila pneumoniae) protein is Dihydrolipoyl dehydrogenase (lpdA).